The sequence spans 296 residues: Acetylglutamate kinase (296 aa).

Substrate is bound by residues 67-68 (GG), Arg-89, and Asn-194.

Belongs to the acetylglutamate kinase family. ArgB subfamily.

It is found in the cytoplasm. It carries out the reaction N-acetyl-L-glutamate + ATP = N-acetyl-L-glutamyl 5-phosphate + ADP. It participates in amino-acid biosynthesis; L-arginine biosynthesis; N(2)-acetyl-L-ornithine from L-glutamate: step 2/4. Its function is as follows. Catalyzes the ATP-dependent phosphorylation of N-acetyl-L-glutamate. This is Acetylglutamate kinase from Syntrophus aciditrophicus (strain SB).